A 138-amino-acid polypeptide reads, in one-letter code: Single-stranded DNA-binding protein 4 (138 aa).

The SSB domain occupies 1–104; the sequence is MINNVVLIGR…VVADSFQILE (104 aa). Positions 107 to 138 are disordered; that stretch reads DNSTNQASMDDQLPPSFGNSQPMDISDDDLPF. Positions 133–138 match the Important for interaction with partner proteins motif; sequence DDDLPF.

As to quaternary structure, homotetramer.

Its function is as follows. Plays an important role in DNA replication, recombination and repair. Binds to ssDNA and to an array of partner proteins to recruit them to their sites of action during DNA metabolism. This is Single-stranded DNA-binding protein 4 (ssb4) from Streptococcus agalactiae serotype V (strain ATCC BAA-611 / 2603 V/R).